Here is a 770-residue protein sequence, read N- to C-terminus: Arf-GAP with coiled-coil, ANK repeat and PH domain-containing protein 2 (770 aa).

One can recognise a BAR domain in the interval 6-226 (DFEECLKDSP…MKDLGAQLDR (221 aa)). The PH domain occupies 266 to 361 (GIVMEGYLFK…WIKAVQTSIA (96 aa)). A disordered region spans residues 371–392 (SEKLDKKSSPSTGSLDSGSESK). Positions 379–388 (SPSTGSLDSG) are enriched in low complexity. Phosphoserine occurs at positions 384 and 387. An Arf-GAP domain is found at 399 to 520 (ESALQRVQCI…KFVDKYSTLL (122 aa)). The C4-type zinc-finger motif lies at 414 to 437 (CCDCGLADPRWASINLGITLCIEC). Ser521 carries the phosphoserine modification. The span at 548 to 561 (TPVKSNDSGIQQCS) shows a compositional bias: polar residues. The disordered stretch occupies residues 548–571 (TPVKSNDSGIQQCSDDGRESLPST). Phosphoserine is present on residues Ser573 and Ser576. 3 ANK repeats span residues 632 to 661 (NQAT…NVNQ), 665 to 694 (QGRG…NQHA), and 698 to 727 (EGKD…NEEM). Residue Tyr734 is modified to Phosphotyrosine. Ser767 is modified (phosphoserine).

In terms of assembly, interacts with RAB35 (GTP-bound form); the interaction is direct and probably recruits ACAP2 to membranes. Interacts with MICALL1; the interaction is indirect through RAB35.

It localises to the endosome membrane. It is found in the cell membrane. With respect to regulation, GAP activity stimulated by phosphatidylinositol 4,5-bisphosphate (PIP2) and phosphatidic acid. GTPase-activating protein (GAP) for ADP ribosylation factor 6 (ARF6). Doesn't show GAP activity for RAB35. The sequence is that of Arf-GAP with coiled-coil, ANK repeat and PH domain-containing protein 2 (Acap2) from Rattus norvegicus (Rat).